We begin with the raw amino-acid sequence, 189 residues long: Chitin synthase 1 (189 aa).

This sequence belongs to the chitin synthase family.

It is found in the cell membrane. The catalysed reaction is [(1-&gt;4)-N-acetyl-beta-D-glucosaminyl](n) + UDP-N-acetyl-alpha-D-glucosamine = [(1-&gt;4)-N-acetyl-beta-D-glucosaminyl](n+1) + UDP + H(+). Polymerizes chitin, a structural polymer of the cell wall and septum, by transferring the sugar moiety of UDP-GlcNAc to the non-reducing end of the growing chitin polymer. This Schizophyllum commune (Split gill fungus) protein is Chitin synthase 1 (CHS1).